The following is a 180-amino-acid chain: Ribosome rescue factor SmrB (180 aa).

In terms of domain architecture, Smr spans 98–173; sequence LDLHGLTQLQ…GNAALLVLVA (76 aa).

The protein belongs to the SmrB family. As to quaternary structure, associates with collided ribosomes, but not with correctly translating polysomes.

Functionally, acts as a ribosome collision sensor. Detects stalled/collided disomes (pairs of ribosomes where the leading ribosome is stalled and a second ribosome has collided with it) and endonucleolytically cleaves mRNA at the 5' boundary of the stalled ribosome. Stalled/collided disomes form a new interface (primarily via the 30S subunits) that binds SmrB. Cleaved mRNA becomes available for tmRNA ligation, leading to ribosomal subunit dissociation and rescue of stalled ribosomes. In Pectobacterium carotovorum subsp. carotovorum (strain PC1), this protein is Ribosome rescue factor SmrB.